Consider the following 269-residue polypeptide: MDNALVRLTQVGVSFNGQAVLSDVDLAIEPGQIVTLIGPNGAGKTTLVRSVLGLLKPHVGEVWRRPRLTIGYMPQKLHVDATLPLSVLRFLRLVPGVKREQALAALREVGAAHVLERPLQSISGGELQRVLLARALLRKPELLVLDEPVQGVDVAGQAELYRLIGKLRDRYGCGVLMVSHDLHLVMSATDQVVCLNRHVCCSGHPEQVSGDPAFVELFGQDARSLAIYHHHHDHAHDLHGEVVKAGPGALPPGTRFTPVHKHGPDCNHG.

Residues 6–221 (VRLTQVGVSF…PAFVELFGQD (216 aa)) enclose the ABC transporter domain. 38 to 45 (GPNGAGKT) is a binding site for ATP.

It belongs to the ABC transporter superfamily. Zinc importer (TC 3.A.1.15.5) family. The complex is composed of two ATP-binding proteins (ZnuC), two transmembrane proteins (ZnuB) and a solute-binding protein (ZnuA).

The protein localises to the cell inner membrane. The catalysed reaction is Zn(2+)(out) + ATP(in) + H2O(in) = Zn(2+)(in) + ADP(in) + phosphate(in) + H(+)(in). Part of the ABC transporter complex ZnuABC involved in zinc import. Responsible for energy coupling to the transport system. This chain is Zinc import ATP-binding protein ZnuC, found in Pseudomonas aeruginosa (strain UCBPP-PA14).